The chain runs to 631 residues: 1-deoxy-D-xylulose-5-phosphate synthase (631 aa).

Thiamine diphosphate contacts are provided by residues histidine 87 and glycine 128–serine 130. Aspartate 159 contributes to the Mg(2+) binding site. Thiamine diphosphate is bound by residues glycine 160–alanine 161, asparagine 188, phenylalanine 295, and glutamate 377. A Mg(2+)-binding site is contributed by asparagine 188.

This sequence belongs to the transketolase family. DXPS subfamily. Homodimer. Mg(2+) serves as cofactor. It depends on thiamine diphosphate as a cofactor.

The catalysed reaction is D-glyceraldehyde 3-phosphate + pyruvate + H(+) = 1-deoxy-D-xylulose 5-phosphate + CO2. It participates in metabolic intermediate biosynthesis; 1-deoxy-D-xylulose 5-phosphate biosynthesis; 1-deoxy-D-xylulose 5-phosphate from D-glyceraldehyde 3-phosphate and pyruvate: step 1/1. Functionally, catalyzes the acyloin condensation reaction between C atoms 2 and 3 of pyruvate and glyceraldehyde 3-phosphate to yield 1-deoxy-D-xylulose-5-phosphate (DXP). This is 1-deoxy-D-xylulose-5-phosphate synthase from Pseudomonas putida (strain GB-1).